Here is a 58-residue protein sequence, read N- to C-terminus: Sperm protamine P1 (58 aa).

Residues 1–58 (MARYRRRSRSRSRSRYGRRRRRSRSRRRRSRRRRRRRGRRGRGYHRRSPHRRRRRRRR) are disordered.

The protein belongs to the protamine P1 family. Testis.

It is found in the nucleus. Its subcellular location is the chromosome. In terms of biological role, protamines substitute for histones in the chromatin of sperm during the haploid phase of spermatogenesis. They compact sperm DNA into a highly condensed, stable and inactive complex. The protein is Sperm protamine P1 (PRM1) of Monodelphis domestica (Gray short-tailed opossum).